Here is a 419-residue protein sequence, read N- to C-terminus: UDP-N-acetylglucosamine 1-carboxyvinyltransferase (419 aa).

Residue 22–23 (KN) participates in phosphoenolpyruvate binding. Arg92 is a UDP-N-acetyl-alpha-D-glucosamine binding site. Cys116 (proton donor) is an active-site residue. A 2-(S-cysteinyl)pyruvic acid O-phosphothioketal modification is found at Cys116. UDP-N-acetyl-alpha-D-glucosamine contacts are provided by residues 121 to 125 (RPIDQ), Asp305, and Ile327.

It belongs to the EPSP synthase family. MurA subfamily.

The protein localises to the cytoplasm. It carries out the reaction phosphoenolpyruvate + UDP-N-acetyl-alpha-D-glucosamine = UDP-N-acetyl-3-O-(1-carboxyvinyl)-alpha-D-glucosamine + phosphate. Its pathway is cell wall biogenesis; peptidoglycan biosynthesis. Cell wall formation. Adds enolpyruvyl to UDP-N-acetylglucosamine. This Trichlorobacter lovleyi (strain ATCC BAA-1151 / DSM 17278 / SZ) (Geobacter lovleyi) protein is UDP-N-acetylglucosamine 1-carboxyvinyltransferase.